A 132-amino-acid polypeptide reads, in one-letter code: Sirohydrochlorin cobaltochelatase (132 aa).

Catalysis depends on histidine 10, which acts as the Proton acceptor. Histidine 10 provides a ligand contact to Co(2+). Residues arginine 46 and 69–74 (ISYGLH) each bind substrate. Histidine 74 serves as a coordination point for Co(2+).

This sequence belongs to the CbiX family. CbiXS subfamily. Homotetramer; dimer of dimers.

It carries out the reaction Co-sirohydrochlorin + 2 H(+) = sirohydrochlorin + Co(2+). It functions in the pathway cofactor biosynthesis; adenosylcobalamin biosynthesis; cob(II)yrinate a,c-diamide from sirohydrochlorin (anaerobic route): step 1/10. Catalyzes the insertion of Co(2+) into sirohydrochlorin as part of the anaerobic pathway to cobalamin biosynthesis. In Archaeoglobus fulgidus (strain ATCC 49558 / DSM 4304 / JCM 9628 / NBRC 100126 / VC-16), this protein is Sirohydrochlorin cobaltochelatase.